The primary structure comprises 138 residues: Gonadotropin subunit beta-2 (138 aa).

The first 21 residues, 1 to 21 (MPASSYFLLFFFMNFFSPAQS), serve as a signal peptide directing secretion. Disulfide bonds link cysteine 27/cysteine 75, cysteine 41/cysteine 90, cysteine 44/cysteine 128, cysteine 52/cysteine 106, cysteine 56/cysteine 108, and cysteine 111/cysteine 118. Residue asparagine 31 is glycosylated (N-linked (GlcNAc...) asparagine).

The protein belongs to the glycoprotein hormones subunit beta family. As to quaternary structure, heterodimer of an alpha and a beta chain.

The protein localises to the secreted. Its function is as follows. Involved in gametogenesis and steroidogenesis. The chain is Gonadotropin subunit beta-2 (cgbb) from Clarias gariepinus (North African catfish).